The primary structure comprises 160 residues: Nucleotide-binding protein VC_1508 (160 aa).

It belongs to the YajQ family.

Its function is as follows. Nucleotide-binding protein. The sequence is that of Nucleotide-binding protein VC_1508 from Vibrio cholerae serotype O1 (strain ATCC 39315 / El Tor Inaba N16961).